Consider the following 1189-residue polypeptide: Pyruvate carboxylase (1189 aa).

The Biotin carboxylation domain maps to 21–473 (TMNKILVANR…WTTFIDDTPE (453 aa)). The ATP site is built by Lys-139, Glu-223, and His-258. The ATP-grasp domain occupies 143–340 (RNLAYAANVP…IVAAQIQIAA (198 aa)). Residue Arg-315 is part of the active site. Residues 559–826 (LMIMDTTWRD…ETGIPEANAR (268 aa)) form the Pyruvate carboxyltransferase domain. Substrate is bound by residues 567 to 571 (RDAHQ) and Arg-640. Residue Asp-568 participates in a divalent metal cation binding. A divalent metal cation is bound by residues Lys-736, His-766, and His-768. Residue Lys-736 is modified to N6-carboxylysine. Thr-900 contributes to the substrate binding site. Residues 1099-1174 (KADAHNPNEI…DASDLIPKSS (76 aa)) form the Biotinyl-binding domain. Lys-1140 carries the N6-biotinyllysine modification.

It depends on biotin as a cofactor. Requires Zn(2+) as cofactor.

The protein resides in the cytoplasm. It catalyses the reaction hydrogencarbonate + pyruvate + ATP = oxaloacetate + ADP + phosphate + H(+). Its pathway is carbohydrate biosynthesis; gluconeogenesis. Functionally, pyruvate carboxylase catalyzes a 2-step reaction, involving the ATP-dependent carboxylation of the covalently attached biotin in the first step and the transfer of the carboxyl group to pyruvate in the second. This chain is Pyruvate carboxylase (PYC1), found in Komagataella pastoris (Yeast).